A 358-amino-acid chain; its full sequence is MDYADFDHQKLVEWLKAHGEKEFHAKQILSWIYQKGVLSWDKMSNLSQSLREKLAKHIRLPVLELVRYTESIDQETIKFLWRLRDGNLVESVLILSGIRRTVCVSSQVGCPAKCAFCASGQQGFFRNLRPTEIIEQILQINAWLSSKGEKVSHVVYMGMGEPLKNYESVVASIRVLSHPDFCNISQRRITVSTVGVVEGIKRLSKEGLKVNLVLSLHAPNQHIRKKIIPYARKYPLEEILESMDEYAQKTKRDITFEYTLLAGINDHPDHAHELAHLLKGKQCTVNLIPYNPIPGLRLKRPEKKAIKQFRSVLYGSHIVNTCRYTKGDDIGAACGQLALQEREGQTGLPMLKEVAFGS.

Residue Glu-90 is the Proton acceptor of the active site. The Radical SAM core domain maps to 96–328; it reads SGIRRTVCVS…VNTCRYTKGD (233 aa). An intrachain disulfide couples Cys-103 to Cys-334. [4Fe-4S] cluster is bound by residues Cys-110, Cys-114, and Cys-117. Residues 160–161, Ser-192, 215–217, and Asn-291 each bind S-adenosyl-L-methionine; these read GE and SLH. Catalysis depends on Cys-334, which acts as the S-methylcysteine intermediate.

This sequence belongs to the radical SAM superfamily. RlmN family. [4Fe-4S] cluster is required as a cofactor.

The protein localises to the cytoplasm. The enzyme catalyses adenosine(2503) in 23S rRNA + 2 reduced [2Fe-2S]-[ferredoxin] + 2 S-adenosyl-L-methionine = 2-methyladenosine(2503) in 23S rRNA + 5'-deoxyadenosine + L-methionine + 2 oxidized [2Fe-2S]-[ferredoxin] + S-adenosyl-L-homocysteine. It catalyses the reaction adenosine(37) in tRNA + 2 reduced [2Fe-2S]-[ferredoxin] + 2 S-adenosyl-L-methionine = 2-methyladenosine(37) in tRNA + 5'-deoxyadenosine + L-methionine + 2 oxidized [2Fe-2S]-[ferredoxin] + S-adenosyl-L-homocysteine. In terms of biological role, specifically methylates position 2 of adenine 2503 in 23S rRNA and position 2 of adenine 37 in tRNAs. The sequence is that of Probable dual-specificity RNA methyltransferase RlmN 2 from Protochlamydia amoebophila (strain UWE25).